Reading from the N-terminus, the 249-residue chain is Caffeoyl-CoA O-methyltransferase 1 (249 aa).

Lys23 is a substrate binding site. Residues Thr65, Glu87, 89 to 90 (GV), Ser95, Asp113, and Ala142 contribute to the S-adenosyl-L-methionine site. Asp165 provides a ligand contact to substrate. Asp165 is a binding site for a divalent metal cation. Asp167 contacts S-adenosyl-L-methionine. Residues Asp191 and Asn192 each contribute to the a divalent metal cation site. Asn196 lines the substrate pocket.

It belongs to the class I-like SAM-binding methyltransferase superfamily. Cation-dependent O-methyltransferase family. CCoAMT subfamily. A divalent metal cation serves as cofactor. Mostly expressed in petal limbs and tubes, and, at low levels, in flower buds, stamens, pistils, stems, roots and leaves.

It is found in the cytoplasm. The protein resides in the cytosol. It carries out the reaction (E)-caffeoyl-CoA + S-adenosyl-L-methionine = (E)-feruloyl-CoA + S-adenosyl-L-homocysteine + H(+). The catalysed reaction is (E)-5-hydroxyferuloyl-CoA + S-adenosyl-L-methionine = (E)-sinapoyl-CoA + S-adenosyl-L-homocysteine + H(+). It functions in the pathway aromatic compound metabolism; phenylpropanoid biosynthesis. Involved in the production of floral volatile phenylpropanoids in flowers of fragrant cultivars (e.g. cv. Mitchell and cv. V26) from cinnamic acid, a common precursor with the anthocyanin biosynthesis pathway involved in flower pigmentation. Methylates caffeoyl-CoA to feruloyl-CoA, also able to methylate 5-hydroxyferuloyl-CoA. This Petunia hybrida (Petunia) protein is Caffeoyl-CoA O-methyltransferase 1.